Consider the following 61-residue polypeptide: Small ribosomal subunit protein uS14 (61 aa).

Zn(2+)-binding residues include Cys-24, Cys-27, Cys-40, and Cys-43.

This sequence belongs to the universal ribosomal protein uS14 family. Zinc-binding uS14 subfamily. As to quaternary structure, part of the 30S ribosomal subunit. Contacts proteins S3 and S10. Zn(2+) serves as cofactor.

Functionally, binds 16S rRNA, required for the assembly of 30S particles and may also be responsible for determining the conformation of the 16S rRNA at the A site. The polypeptide is Small ribosomal subunit protein uS14 (Geobacillus stearothermophilus (Bacillus stearothermophilus)).